Here is a 214-residue protein sequence, read N- to C-terminus: Putative AgrB-like protein (214 aa).

Transmembrane regions (helical) follow at residues 41–61 (IISV…LIFL), 82–102 (CTLL…SSFF), 109–129 (IIVF…FKFA), 154–174 (ILTI…NLGW), and 182–202 (LSII…GNIL).

The protein belongs to the AgrB family.

The protein localises to the cell membrane. Functionally, may be involved in the proteolytic processing of a quorum sensing system signal molecule precursor. The sequence is that of Putative AgrB-like protein from Clostridium perfringens (strain SM101 / Type A).